We begin with the raw amino-acid sequence, 245 residues long: 1-(5-phosphoribosyl)-5-[(5-phosphoribosylamino)methylideneamino] imidazole-4-carboxamide isomerase (245 aa).

D7 serves as the catalytic Proton acceptor. Residue D129 is the Proton donor of the active site.

It belongs to the HisA/HisF family.

The protein localises to the cytoplasm. It carries out the reaction 1-(5-phospho-beta-D-ribosyl)-5-[(5-phospho-beta-D-ribosylamino)methylideneamino]imidazole-4-carboxamide = 5-[(5-phospho-1-deoxy-D-ribulos-1-ylimino)methylamino]-1-(5-phospho-beta-D-ribosyl)imidazole-4-carboxamide. It participates in amino-acid biosynthesis; L-histidine biosynthesis; L-histidine from 5-phospho-alpha-D-ribose 1-diphosphate: step 4/9. This is 1-(5-phosphoribosyl)-5-[(5-phosphoribosylamino)methylideneamino] imidazole-4-carboxamide isomerase from Salmonella choleraesuis (strain SC-B67).